We begin with the raw amino-acid sequence, 132 residues long: uncharacterized protein (132 aa).

This is an uncharacterized protein from Archaeoglobus fulgidus (strain ATCC 49558 / DSM 4304 / JCM 9628 / NBRC 100126 / VC-16).